A 172-amino-acid chain; its full sequence is UPF0102 protein Pcryo_2198 (172 aa).

It belongs to the UPF0102 family.

In Psychrobacter cryohalolentis (strain ATCC BAA-1226 / DSM 17306 / VKM B-2378 / K5), this protein is UPF0102 protein Pcryo_2198.